The chain runs to 246 residues: 3-deoxy-manno-octulosonate cytidylyltransferase (246 aa).

Belongs to the KdsB family.

The protein localises to the cytoplasm. The enzyme catalyses 3-deoxy-alpha-D-manno-oct-2-ulosonate + CTP = CMP-3-deoxy-beta-D-manno-octulosonate + diphosphate. Its pathway is nucleotide-sugar biosynthesis; CMP-3-deoxy-D-manno-octulosonate biosynthesis; CMP-3-deoxy-D-manno-octulosonate from 3-deoxy-D-manno-octulosonate and CTP: step 1/1. It participates in bacterial outer membrane biogenesis; lipopolysaccharide biosynthesis. Functionally, activates KDO (a required 8-carbon sugar) for incorporation into bacterial lipopolysaccharide in Gram-negative bacteria. This chain is 3-deoxy-manno-octulosonate cytidylyltransferase, found in Leptospira borgpetersenii serovar Hardjo-bovis (strain JB197).